The following is a 444-amino-acid chain: Cobyrinate a,c-diamide synthase (444 aa).

One can recognise a GATase cobBQ-type domain in the interval 250–438; sequence IIAIAQDRAF…PHIHFFGSYK (189 aa). Cys-332 serves as the catalytic Nucleophile.

This sequence belongs to the CobB/CbiA family. Requires Mg(2+) as cofactor.

The catalysed reaction is cob(II)yrinate + 2 L-glutamine + 2 ATP + 2 H2O = cob(II)yrinate a,c diamide + 2 L-glutamate + 2 ADP + 2 phosphate + 2 H(+). Its pathway is cofactor biosynthesis; adenosylcobalamin biosynthesis; cob(II)yrinate a,c-diamide from sirohydrochlorin (anaerobic route): step 10/10. Functionally, catalyzes the ATP-dependent amidation of the two carboxylate groups at positions a and c of cobyrinate, using either L-glutamine or ammonia as the nitrogen source. In Fusobacterium nucleatum subsp. nucleatum (strain ATCC 25586 / DSM 15643 / BCRC 10681 / CIP 101130 / JCM 8532 / KCTC 2640 / LMG 13131 / VPI 4355), this protein is Cobyrinate a,c-diamide synthase.